Reading from the N-terminus, the 413-residue chain is MPSVRSIEDYFGQIESLLYRQDWTNGEKISKFVSTYDEHAQEPFMHIEAYGSRSKRCRVSEDEVFDEIVCLHLHVLYNIHVAQDLITAQSTQIQIIQLFNKEILQKRKDENWFLPIFYRLCTDLRWLSKGAEACVSGDDEGDSNANSFFESAAKAITECYRTCVSDVHAEEGTTKKVAMLNMTNQLFQIYFQINKLNLLKPLIRAIDNCGSLYHDFLMSDKVAYNYFLGRKAMFDADLNLAEKSLLYAFRNCPADSMSNKRKILIYLIPVKMFLGHMPTSQLLHEYRLDEFQDVVAGVKDGNLAQLDGALAANEAFFIKCGIFLMLEKLRMITFRTLFKKVSQIVGTAQIPLDAFQTALRFVGVTDVDMDELECIIANLIASKKIKGYLSHQHQKLVISKMNAFPTLSGVSSN.

The 182-residue stretch at 222 to 403 folds into the PCI domain; it reads VAYNYFLGRK…QKLVISKMNA (182 aa).

It belongs to the CSN12 family.

The polypeptide is PCI domain-containing protein 2 homolog (Caenorhabditis elegans).